The primary structure comprises 466 residues: Histidine--tRNA ligase (466 aa).

It belongs to the class-II aminoacyl-tRNA synthetase family. In terms of assembly, homodimer.

It is found in the cytoplasm. It catalyses the reaction tRNA(His) + L-histidine + ATP = L-histidyl-tRNA(His) + AMP + diphosphate + H(+). The protein is Histidine--tRNA ligase (hisS) of Bifidobacterium longum (strain NCC 2705).